The primary structure comprises 384 residues: D-galactosamine-6-phosphate deaminase AgaS (384 aa).

SIS domains follow at residues 45–197 (LEPL…SQTF) and 215–364 (SEGV…PDTP).

The protein belongs to the SIS family. AgaS subfamily.

It catalyses the reaction D-galactosamine 6-phosphate + H2O = D-tagatopyranose 1-phosphate + NH4(+). Functionally, catalyzes the isomerization-deamination of galactosamine 6-phosphate to form tagatofuranose 6-phosphate and ammonium ion. This Escherichia coli protein is D-galactosamine-6-phosphate deaminase AgaS.